An 841-amino-acid chain; its full sequence is DNA mismatch repair protein MutS (841 aa).

Residue 600-607 (GPNMAGKS) coordinates ATP.

This sequence belongs to the DNA mismatch repair MutS family.

Functionally, this protein is involved in the repair of mismatches in DNA. It is possible that it carries out the mismatch recognition step. This protein has a weak ATPase activity. The polypeptide is DNA mismatch repair protein MutS (Carboxydothermus hydrogenoformans (strain ATCC BAA-161 / DSM 6008 / Z-2901)).